The chain runs to 89 residues: Cell division topological specificity factor (89 aa).

The protein belongs to the MinE family.

Prevents the cell division inhibition by proteins MinC and MinD at internal division sites while permitting inhibition at polar sites. This ensures cell division at the proper site by restricting the formation of a division septum at the midpoint of the long axis of the cell. In Desulforudis audaxviator (strain MP104C), this protein is Cell division topological specificity factor.